The chain runs to 175 residues: Bcl-2-related protein A1 (175 aa).

Positions 77 to 97 match the BH1 motif; sequence KEFEDGIINWGRIVTIFAFEG. Positions 132–147 match the BH2 motif; it reads EWIRQNGGWENGFVKK.

The protein belongs to the Bcl-2 family. Interacts directly with BAK1, BID, BMF and BBC3. Interacts directly with BCL2L11/BIM. Interacts with BAX isoform Sigma. Interacts directly with PMAIP1. Interacts with RTL10/BOP. Interacts with ING4. Interacts with UBQLN4. In terms of tissue distribution, seems to be restricted to the hematopoietic compartment. Expressed in peripheral blood, spleen, and bone marrow, at moderate levels in lung, small intestine and testis, at a minimal levels in other tissues. Also found in vascular smooth muscle cells and hematopoietic malignancies.

It localises to the cytoplasm. In terms of biological role, retards apoptosis induced by IL-3 deprivation. May function in the response of hemopoietic cells to external signals and in maintaining endothelial survival during infection. Can inhibit apoptosis induced by serum starvation in the mammary epithelial cell line HC11. This chain is Bcl-2-related protein A1 (BCL2A1), found in Homo sapiens (Human).